We begin with the raw amino-acid sequence, 275 residues long: Elongation factor Ts (275 aa).

The involved in Mg(2+) ion dislocation from EF-Tu stretch occupies residues 76–79; that stretch reads TDFV.

It belongs to the EF-Ts family.

The protein localises to the cytoplasm. Its function is as follows. Associates with the EF-Tu.GDP complex and induces the exchange of GDP to GTP. It remains bound to the aminoacyl-tRNA.EF-Tu.GTP complex up to the GTP hydrolysis stage on the ribosome. This chain is Elongation factor Ts, found in Salinispora tropica (strain ATCC BAA-916 / DSM 44818 / JCM 13857 / NBRC 105044 / CNB-440).